We begin with the raw amino-acid sequence, 254 residues long: tRNA (guanine-N(7)-)-methyltransferase (254 aa).

The tract at residues 1–34 (MNTNTPAHPPEGAPLSEATQAALASAEHAPDSPG) is disordered. S-adenosyl-L-methionine is bound by residues glutamate 87, glutamate 112, aspartate 139, and aspartate 162. Residue aspartate 162 is part of the active site. Substrate is bound by residues lysine 166, aspartate 198, and 233–236 (TKFE).

It belongs to the class I-like SAM-binding methyltransferase superfamily. TrmB family.

It carries out the reaction guanosine(46) in tRNA + S-adenosyl-L-methionine = N(7)-methylguanosine(46) in tRNA + S-adenosyl-L-homocysteine. The protein operates within tRNA modification; N(7)-methylguanine-tRNA biosynthesis. Functionally, catalyzes the formation of N(7)-methylguanine at position 46 (m7G46) in tRNA. In Bordetella pertussis (strain Tohama I / ATCC BAA-589 / NCTC 13251), this protein is tRNA (guanine-N(7)-)-methyltransferase.